The sequence spans 259 residues: Thiazole synthase (259 aa).

The Schiff-base intermediate with DXP role is filled by K95. Residues G156, 182–183 (AG), and 204–205 (AS) contribute to the 1-deoxy-D-xylulose 5-phosphate site.

It belongs to the ThiG family. Homotetramer. Forms heterodimers with either ThiH or ThiS.

It is found in the cytoplasm. The catalysed reaction is [ThiS sulfur-carrier protein]-C-terminal-Gly-aminoethanethioate + 2-iminoacetate + 1-deoxy-D-xylulose 5-phosphate = [ThiS sulfur-carrier protein]-C-terminal Gly-Gly + 2-[(2R,5Z)-2-carboxy-4-methylthiazol-5(2H)-ylidene]ethyl phosphate + 2 H2O + H(+). It functions in the pathway cofactor biosynthesis; thiamine diphosphate biosynthesis. In terms of biological role, catalyzes the rearrangement of 1-deoxy-D-xylulose 5-phosphate (DXP) to produce the thiazole phosphate moiety of thiamine. Sulfur is provided by the thiocarboxylate moiety of the carrier protein ThiS. In vitro, sulfur can be provided by H(2)S. This chain is Thiazole synthase, found in Corynebacterium efficiens (strain DSM 44549 / YS-314 / AJ 12310 / JCM 11189 / NBRC 100395).